Consider the following 147-residue polypeptide: MHLTADQVAALKASWPEVSAGDGGAQLGLEMFTKYFHENPQMMFIFGYSGRTEALKHSSKLQHHGKVIIDQIGKAVAEMDNAKQMAGTLHALGVRHKGFGDIRAEFFPALGMCLLDAMEEKVPGLNRTLWAAAYREISDACIAGLQS.

One can recognise a Globin domain in the interval His-2–Gln-146. His-96 provides a ligand contact to heme b.

It belongs to the globin family. Polymer.

In Glycera dibranchiata (Bloodworm), this protein is Globin, major polymeric component P1.